The sequence spans 687 residues: Glycine--tRNA ligase beta subunit (687 aa).

It belongs to the class-II aminoacyl-tRNA synthetase family. As to quaternary structure, tetramer of two alpha and two beta subunits.

Its subcellular location is the cytoplasm. It catalyses the reaction tRNA(Gly) + glycine + ATP = glycyl-tRNA(Gly) + AMP + diphosphate. This Ruegeria sp. (strain TM1040) (Silicibacter sp.) protein is Glycine--tRNA ligase beta subunit.